The primary structure comprises 513 residues: ATP synthase subunit alpha (513 aa).

169 to 176 contacts ATP; the sequence is GDRQTGKS.

The protein belongs to the ATPase alpha/beta chains family. In terms of assembly, F-type ATPases have 2 components, CF(1) - the catalytic core - and CF(0) - the membrane proton channel. CF(1) has five subunits: alpha(3), beta(3), gamma(1), delta(1), epsilon(1). CF(0) has three main subunits: a(1), b(2) and c(9-12). The alpha and beta chains form an alternating ring which encloses part of the gamma chain. CF(1) is attached to CF(0) by a central stalk formed by the gamma and epsilon chains, while a peripheral stalk is formed by the delta and b chains.

The protein resides in the cell inner membrane. It carries out the reaction ATP + H2O + 4 H(+)(in) = ADP + phosphate + 5 H(+)(out). Functionally, produces ATP from ADP in the presence of a proton gradient across the membrane. The alpha chain is a regulatory subunit. This is ATP synthase subunit alpha from Sodalis glossinidius (strain morsitans).